Consider the following 186-residue polypeptide: ADP-ribosylation factor-like protein 8B (186 aa).

An intramembrane region (note=Mediates targeting to membranes) is located at residues 1–19; sequence MLALISRLLDWFRSLFWKE. Residues 29-35, 71-75, and 130-133 each bind GTP; these read QYSGKTT, DIGGQ, and NKRD. Residue Lys141 forms a Glycyl lysine isopeptide (Lys-Gly) (interchain with G-Cter in ubiquitin) linkage.

The protein belongs to the small GTPase superfamily. Arf family. As to quaternary structure, interacts with tubulin. Interacts with BORCS5; recruits ARL8B to lysosomes. Interacts with VPS41; the interaction mediates the recruitment of the HOPS complex to lysosomes. Interacts (GTP-bound form) with PLEKHM2 (via RUN domain); the interaction is required to recruit the motor protein kinesin-1 on lysosomes. Interacts (GTP-bound form) with PLEKHM1 (via RUN domain); the interaction is required for PLEKHM1 localization to lysosomes and for ARL8B function in delivery and degradation of endocytic and autophagic cargo in lysosomes. PLEKHM1 and PLEKHM2 compete for interaction with ARL8B. Interacts (GTP-bound form) with RUFY1; the interaction is required for RUFY1 endosomal location. When GTP-bound, interacts with RUFY3 and RUFY4, but not with RUFY1, nor RUFY2. In terms of processing, ubiquitinated at Lys-141 by RNF167, leading to its degradation.

It localises to the late endosome membrane. The protein localises to the lysosome membrane. It is found in the cytoplasm. The protein resides in the cytoskeleton. Its subcellular location is the spindle. It localises to the cell projection. The protein localises to the axon. It is found in the synapse. The protein resides in the cytolytic granule membrane. Its subcellular location is the early endosome membrane. The enzyme catalyses GTP + H2O = GDP + phosphate + H(+). Functionally, small GTPase which cycles between active GTP-bound and inactive GDP-bound states. In its active state, binds to a variety of effector proteins playing a key role in the regulation of lysosomal positioning which is important for nutrient sensing, natural killer cell-mediated cytotoxicity and antigen presentation. Along with its effectors, orchestrates lysosomal transport and fusion. Localizes specifically to lysosomal membranes and mediates anterograde lysosomal motility by recruiting PLEKHM2, which in turn recruits the motor protein kinesin-1 on lysosomes. Required for lysosomal and cytolytic granule exocytosis. Critical factor involved in NK cell-mediated cytotoxicity. Drives the polarization of cytolytic granules and microtubule-organizing centers (MTOCs) toward the immune synapse between effector NK lymphocytes and target cells. In neurons, mediates the anterograde axonal long-range transport of presynaptic lysosome-related vesicles required for presynaptic biogenesis and synaptic function. Also acts as a regulator of endosome to lysosome trafficking pathways of special significance for host defense. Recruits RUFY1 onto early endosomes regulating endosomes to trans-Golgi network proteins retrieval. Regulates cargo trafficking to lysosomes by binding to PLEKHM1 and recruiting the HOPS subunit VPS41, resulting in functional assembly of the HOPS complex on lysosomal membranes. Plays an important role in cargo delivery to lysosomes for antigen presentation and microbial killing. Directs the intersection of CD1d with lipid antigens in lysosomes, and plays a role in intersecting phagosomes with lysosomes to generate phagolysosomes that kill microbes. Involved in the process of MHC II presentation. Regulates the delivery of antigens to lysosomes and the formation of MHC II-peptide complexes through the recruitment of the HOPS complex to lysosomes allowing the fusion of late endosomes to lysosomes. May play a role in chromosome segregation. The protein is ADP-ribosylation factor-like protein 8B (ARL8B) of Macaca fascicularis (Crab-eating macaque).